The following is a 1235-amino-acid chain: N-acetylglucosamine-1-phosphotransferase subunits alpha/beta (1235 aa).

The chain crosses the membrane as a helical span at residues 22-42; it reads VCFVGVVVTIVSAFQFGEVVL. N-linked (GlcNAc...) asparagine glycosylation is found at N83, N114, N148, and N179. 4 disulfides stabilise this stretch: C438-C461, C452-C468, C505-C528, and C519-C535. LNR repeat units follow at residues 438–473 and 505–545; these read CAEG…GNTA and CNQG…ELYK. Residues D449, D464, D467, D516, D531, and D534 each coordinate Ca(2+). 2 N-linked (GlcNAc...) asparagine glycosylation sites follow: N614 and N729. One can recognise a DMAP1-binding domain in the interval 699 to 823; sequence NISLLPKEAQ…AQPTLGVTVS (125 aa). 2 disordered regions span residues 751 to 783 and 830 to 850; these read QART…HRSE and LIVP…AEGN. A compositionally biased stretch (basic and acidic residues) spans 837-848; the sequence is HLPKEEESDRAE. The region spanning 984 to 1019 is the EF-hand domain; sequence VQPLNISQVFHEVDTDQSGVLSDREIRTLATRIHDL. N988 carries N-linked (GlcNAc...) asparagine glycosylation. Positions 997, 999, 1001, and 1008 each coordinate Ca(2+). A glycan (N-linked (GlcNAc...) asparagine) is linked at N1108. A helical membrane pass occupies residues 1194–1214; the sequence is VLATLIIFTIFSFFAEQIIAL.

Belongs to the stealth family. Hexamer of two alpha, two beta and two gamma (GNPTG) subunits; disulfide-linked. The alpha and/or the beta subunits of the enzyme constitute the catalytic subunits. Interacts with LYSET; facilitates proper localization of GNPTAB. In terms of processing, the alpha- and beta-subunits are generated by a proteolytic cleavage by MBTPS1 protease at the Lys-907-Asp-908 bond.

The protein localises to the golgi apparatus membrane. The catalysed reaction is N(4)-[alpha-D-mannosyl-(1-&gt;2)-alpha-D-mannosyl-(glycan)]-L-asparaginyl-[protein] + UDP-N-acetyl-alpha-D-glucosamine = N(4)-[6-(N-acetyl-alpha-D-glucosaminyl-1-phospho)-alpha-D-mannosyl-(1-&gt;2)-alpha-D-mannosyl-(glycan)]-L-asparaginyl-[protein] + UMP + H(+). Functionally, catalyzes the formation of mannose 6-phosphate (M6P) markers on high mannose type oligosaccharides in the Golgi apparatus. M6P residues are required to bind to the M6P receptors (MPR), which mediate the vesicular transport of lysosomal enzymes to the endosomal/prelysosomal compartment. This Mus musculus (Mouse) protein is N-acetylglucosamine-1-phosphotransferase subunits alpha/beta (Gnptab).